A 116-amino-acid polypeptide reads, in one-letter code: Protein Wnt-5a (116 aa).

The O-palmitoleoyl serine; by PORCN moiety is linked to residue serine 1. Asparagine 69 and asparagine 83 each carry an N-linked (GlcNAc...) asparagine glycan. Residues cysteine 82 and cysteine 97 are joined by a disulfide bond.

Belongs to the Wnt family. Palmitoleoylation is required for efficient binding to frizzled receptors. Depalmitoleoylation leads to Wnt signaling pathway inhibition.

The protein resides in the secreted. It localises to the extracellular space. The protein localises to the extracellular matrix. Functionally, ligand for members of the frizzled family of seven transmembrane receptors. Can activate or inhibit canonical Wnt signaling, depending on receptor context. Required during embryogenesis for extension of the primary anterior-posterior axis. The protein is Protein Wnt-5a (WNT-5A) of Alopias vulpinus (Common thresher shark).